The chain runs to 139 residues: MLSPKRTKFRKQHRGRMRGMAYRGNNIQFGDYALQAVEPSWITARQIEAARRAMTRYIKRGGKIWIRIFPDKPITMRPAETRMGSGKGNPEFWVAVVKPGRIMFEMNGVAEPIAREAMRLAAQKLPIKTKFITRNEEYI.

This sequence belongs to the universal ribosomal protein uL16 family. Part of the 50S ribosomal subunit.

Binds 23S rRNA and is also seen to make contacts with the A and possibly P site tRNAs. This chain is Large ribosomal subunit protein uL16, found in Picosynechococcus sp. (strain ATCC 27264 / PCC 7002 / PR-6) (Agmenellum quadruplicatum).